The primary structure comprises 454 residues: Cobyrinate a,c-diamide synthase (454 aa).

Residues 244-440 enclose the GATase cobBQ-type domain; that stretch reads RLGIAKDKAF…LHVHFYQNPK (197 aa). Residue Cys-326 is the Nucleophile of the active site.

It belongs to the CobB/CbiA family. Mg(2+) serves as cofactor.

The catalysed reaction is cob(II)yrinate + 2 L-glutamine + 2 ATP + 2 H2O = cob(II)yrinate a,c diamide + 2 L-glutamate + 2 ADP + 2 phosphate + 2 H(+). It participates in cofactor biosynthesis; adenosylcobalamin biosynthesis; cob(II)yrinate a,c-diamide from sirohydrochlorin (anaerobic route): step 10/10. Catalyzes the ATP-dependent amidation of the two carboxylate groups at positions a and c of cobyrinate, using either L-glutamine or ammonia as the nitrogen source. The chain is Cobyrinate a,c-diamide synthase from Limosilactobacillus reuteri subsp. reuteri (strain JCM 1112) (Lactobacillus reuteri).